The following is a 478-amino-acid chain: Catalase easC (478 aa).

His54 is an active-site residue. Tyr343 is a heme binding site. Positions Val459–Leu478 are disordered.

The protein belongs to the catalase family. Requires heme as cofactor.

It functions in the pathway alkaloid biosynthesis; ergot alkaloid biosynthesis. Functionally, catalase; part of the gene cluster that mediates the biosynthesis of fungal ergot alkaloid. DmaW catalyzes the first step of ergot alkaloid biosynthesis by condensing dimethylallyl diphosphate (DMAP) and tryptophan to form 4-dimethylallyl-L-tryptophan. The second step is catalyzed by the methyltransferase easF that methylates 4-dimethylallyl-L-tryptophan in the presence of S-adenosyl-L-methionine, resulting in the formation of 4-dimethylallyl-L-abrine. The catalase easC and the FAD-dependent oxidoreductase easE then transform 4-dimethylallyl-L-abrine to chanoclavine-I which is further oxidized by easD in the presence of NAD(+), resulting in the formation of chanoclavine-I aldehyde. Chanoclavine-I aldehyde is the precursor of ergoamides and ergopeptines in Clavicipitaceae, and clavine-type alcaloids such as fumiclavine in Trichocomaceae. However, the metabolites downstream of chanoclavine-I aldehyde in Arthrodermataceae have not been identified yet. In Arthroderma benhamiae (strain ATCC MYA-4681 / CBS 112371) (Trichophyton mentagrophytes), this protein is Catalase easC.